Reading from the N-terminus, the 352-residue chain is Histidinol-phosphate aminotransferase (352 aa).

Lys221 carries the post-translational modification N6-(pyridoxal phosphate)lysine.

It belongs to the class-II pyridoxal-phosphate-dependent aminotransferase family. Histidinol-phosphate aminotransferase subfamily. In terms of assembly, homodimer. Pyridoxal 5'-phosphate serves as cofactor.

It carries out the reaction L-histidinol phosphate + 2-oxoglutarate = 3-(imidazol-4-yl)-2-oxopropyl phosphate + L-glutamate. Its pathway is amino-acid biosynthesis; L-histidine biosynthesis; L-histidine from 5-phospho-alpha-D-ribose 1-diphosphate: step 7/9. The protein is Histidinol-phosphate aminotransferase of Staphylococcus aureus (strain Mu3 / ATCC 700698).